The chain runs to 169 residues: ATP synthase subunit b (169 aa).

Residues 13–33 form a helical membrane-spanning segment; the sequence is LFLFQLINFLIIVFILKKFLF.

The protein belongs to the ATPase B chain family. F-type ATPases have 2 components, F(1) - the catalytic core - and F(0) - the membrane proton channel. F(1) has five subunits: alpha(3), beta(3), gamma(1), delta(1), epsilon(1). F(0) has three main subunits: a(1), b(2) and c(10-14). The alpha and beta chains form an alternating ring which encloses part of the gamma chain. F(1) is attached to F(0) by a central stalk formed by the gamma and epsilon chains, while a peripheral stalk is formed by the delta and b chains.

The protein localises to the cell inner membrane. F(1)F(0) ATP synthase produces ATP from ADP in the presence of a proton or sodium gradient. F-type ATPases consist of two structural domains, F(1) containing the extramembraneous catalytic core and F(0) containing the membrane proton channel, linked together by a central stalk and a peripheral stalk. During catalysis, ATP synthesis in the catalytic domain of F(1) is coupled via a rotary mechanism of the central stalk subunits to proton translocation. Its function is as follows. Component of the F(0) channel, it forms part of the peripheral stalk, linking F(1) to F(0). This Endomicrobium trichonymphae protein is ATP synthase subunit b.